The chain runs to 330 residues: GMP reductase (330 aa).

Residue Cys-180 is the Thioimidate intermediate of the active site. 209-232 serves as a coordination point for NADP(+); it reads LIADGGIRHNGDIAKSVRFGASMV.

The protein belongs to the IMPDH/GMPR family. GuaC type 2 subfamily.

The catalysed reaction is IMP + NH4(+) + NADP(+) = GMP + NADPH + 2 H(+). Functionally, catalyzes the irreversible NADPH-dependent deamination of GMP to IMP. It functions in the conversion of nucleobase, nucleoside and nucleotide derivatives of G to A nucleotides, and in maintaining the intracellular balance of A and G nucleotides. The chain is GMP reductase from Lactobacillus delbrueckii subsp. bulgaricus (strain ATCC 11842 / DSM 20081 / BCRC 10696 / JCM 1002 / NBRC 13953 / NCIMB 11778 / NCTC 12712 / WDCM 00102 / Lb 14).